The primary structure comprises 301 residues: UstYa family oxidase phomYd (301 aa).

Positions 1–26 (MEKFFSPSRHNYADLSPTDVPASEES) are disordered. A helical membrane pass occupies residues 47–69 (VLVNRLLAASTVALVMVSLWLGW). 2 consecutive short sequence motifs (HXXHC) follow at residues 189-194 (THSVHC) and 218-222 (HTDHC). Residue asparagine 275 is glycosylated (N-linked (GlcNAc...) asparagine).

It belongs to the ustYa family.

The protein resides in the membrane. Its pathway is mycotoxin biosynthesis. Functionally, ustYa family oxidase; part of the gene cluster that mediates the biosynthesis of the phomopsins, a group of hexapeptide mycotoxins which infects lupins and causes lupinosis disease in livestock. Within the pathway, phomYd catalyzes the desaturation of the Asp moiety into 2,3-dehydroaspartic acid (dAsp). The pathway starts with the processing of the precursor phomA by several endopeptidases including kexin proteases as well as the cluster-specific S41 family peptidase phomP1 and the oligopeptidase phomG to produce 10 identical copies of the hexapeptide Tyr-Val-Ile-Pro-Ile-Asp. After being excised from the precursor peptide, the core peptides are cyclized and modified post-translationally by enzymes encoded within the gene cluster. The timing and order of proteolysis of the phomA precursor and PTMs are still unknown. Two tyrosinase-like enzymes, phomQ1 and phomQ2, catalyze the chlorination and hydroxylation of Tyr, respectively. PhomYb, is proposed to be involved in the construction of the macrocyclic structure. The other 4 ustYa family proteins may be involved in PTMs that generate the unique structure of phomopsin A. PhomYa is required for the hydroxylation of C-beta of Tyr. PhomYc, phomYd, and phomYe are responsible for the biosynthesis of 2,3-dehydroisoleucine (dIle), 2,3-dehydroaspartic acid (dAsp), and 3,4-dehydroproline (dPro), respectively. While dIle formation by phomYc is indispensable for the installation of dAsp by phomYd, the order of the other PTMs have not been elucidated yet. Most of the biosynthetic enzymes likely have broad substrate specificity, and thus, there might be a metabolic grid from a precursor to phomopsin A. The enzyme(s) responsible for the biosynthesis of 3,4-dehydrovaline (dVal) have also not been identified yet. Finally, phomM acts as an S-adenosylmethionine-dependent alpha-N-methyltransferase that catalyzes two successive N-methylation reactions, converting N-desmethyl-phomopsin A to phomopsin A and phomopsin A further to an N,N-dimethylated congener called phomopsin E. In Diaporthe leptostromiformis (Lupinosis disease fungus), this protein is UstYa family oxidase phomYd.